Here is a 241-residue protein sequence, read N- to C-terminus: Dephospho-CoA kinase CAB5 (241 aa).

Residues 3 to 211 form the DPCK domain; it reads VVGLTGGIAC…PSKLRTVLEY (209 aa). 8-15 provides a ligand contact to ATP; the sequence is GGIACGKS.

This sequence belongs to the CoaE family.

The protein localises to the endoplasmic reticulum. The protein resides in the mitochondrion. Its subcellular location is the nucleus. It carries out the reaction 3'-dephospho-CoA + ATP = ADP + CoA + H(+). It participates in cofactor biosynthesis; coenzyme A biosynthesis; CoA from (R)-pantothenate: step 5/5. Functionally, catalyzes the phosphorylation of the 3'-hydroxyl group of dephosphocoenzyme A to form coenzyme A. The protein is Dephospho-CoA kinase CAB5 (CAB5) of Saccharomyces cerevisiae (strain ATCC 204508 / S288c) (Baker's yeast).